We begin with the raw amino-acid sequence, 162 residues long: Auxin-responsive protein SAUR36 (162 aa).

Belongs to the ARG7 family. In terms of tissue distribution, expressed in embryo, endosperm, growing hypocotyls and shoot apical meristems.

Its function is as follows. Acts a positive regulator of leaf senescence and may mediate auxin-induced leaf senescence. Plays a role in the regulation of seed germination by gibberellins and abscisic acid (ABA). Plays a role in the regulation of light-dependent hypocotyl elongation. This is Auxin-responsive protein SAUR36 from Arabidopsis thaliana (Mouse-ear cress).